A 274-amino-acid chain; its full sequence is NH(3)-dependent NAD(+) synthetase (274 aa).

46-53 lines the ATP pocket; sequence GISGGQDS. Asp52 provides a ligand contact to Mg(2+). Arg140 is a deamido-NAD(+) binding site. An ATP-binding site is contributed by Thr160. Glu165 serves as a coordination point for Mg(2+). 2 residues coordinate deamido-NAD(+): Lys173 and Asp180. Positions 189 and 211 each coordinate ATP. Residue 260–261 participates in deamido-NAD(+) binding; the sequence is HK.

This sequence belongs to the NAD synthetase family. Homodimer.

The catalysed reaction is deamido-NAD(+) + NH4(+) + ATP = AMP + diphosphate + NAD(+) + H(+). It participates in cofactor biosynthesis; NAD(+) biosynthesis; NAD(+) from deamido-NAD(+) (ammonia route): step 1/1. Catalyzes the ATP-dependent amidation of deamido-NAD to form NAD. Uses ammonia as a nitrogen source. The chain is NH(3)-dependent NAD(+) synthetase from Streptococcus pyogenes serotype M6 (strain ATCC BAA-946 / MGAS10394).